The following is a 729-amino-acid chain: Fibroblast growth factor receptor 2 (729 aa).

Residues 1–21 (MFSWSYLMGLVMVATATLSLA) form the signal peptide. Topologically, residues 22–285 (RPSYNIAEDT…ELDSSSEYTE (264 aa)) are extracellular. The disordered stretch occupies residues 29–62 (EDTTLEPEDANSSGDDEDDNDGSEDFTNDNNHMR). Acidic residues predominate over residues 31 to 55 (TTLEPEDANSSGDDEDDNDGSEDFT). N-linked (GlcNAc...) asparagine glycosylation occurs at N39. 2 Ig-like C2-type domains span residues 64 to 157 (PYWT…YHLD) and 166 to 268 (PILQ…AWLT). The tract at residues 71–88 (KLEKKLHAVPAANTVKFR) is heparin-binding. A disulfide bridge links C89 with C141. 7 N-linked (GlcNAc...) asparagine glycosylation sites follow: N138, N151, N175, N207, N228, N241, and N256. C188 and C252 are disulfide-bonded. A helical transmembrane segment spans residues 286–306 (IAIYCVGGFLITCMIGTIMVC). The Cytoplasmic portion of the chain corresponds to 307-729 (HMKGRGKKSD…SQHTNGTIKT (423 aa)). Y374 carries the post-translational modification Phosphotyrosine; by autocatalysis. The Protein kinase domain maps to 389–678 (LTLGKPLGEG…LTQTTNEEYL (290 aa)). Residues 395 to 403 (LGEGCFGQV), K425, 473 to 475 (EYA), and N479 each bind ATP. Residue Y494 is modified to Phosphotyrosine; by autocatalysis. D534 serves as the catalytic Proton acceptor. Residues Y564, Y565, and Y677 each carry the phosphotyrosine; by autocatalysis modification. The disordered stretch occupies residues 683 to 729 (PLEQYSPSYPDTRSSCSSGDDSVFSPDAMPYDPCLPKSQHTNGTIKT). Residues 693–707 (DTRSSCSSGDDSVFS) show a composition bias toward low complexity. The segment covering 720–729 (SQHTNGTIKT) has biased composition (polar residues).

This sequence belongs to the protein kinase superfamily. Tyr protein kinase family. Fibroblast growth factor receptor subfamily. In terms of assembly, monomer. Homodimer after ligand binding. Autophosphorylated. Binding of FGF family members together with heparan sulfate proteoglycan or heparin promotes receptor dimerization and autophosphorylation on tyrosine residues. Autophosphorylation occurs in trans between the two FGFR molecules present in the dimer. In terms of processing, N-glycosylated in the endoplasmic reticulum. The N-glycan chains undergo further maturation to an Endo H-resistant form in the Golgi apparatus. Post-translationally, ubiquitinated. FGFR2 is rapidly ubiquitinated after autophosphorylation, leading to internalization and degradation. Subject to degradation both in lysosomes and by the proteasome.

Its subcellular location is the cell membrane. It is found in the golgi apparatus. The protein resides in the cytoplasmic vesicle. It carries out the reaction L-tyrosyl-[protein] + ATP = O-phospho-L-tyrosyl-[protein] + ADP + H(+). With respect to regulation, present in an inactive conformation in the absence of bound ligand. Ligand binding leads to dimerization and activation by autophosphorylation on tyrosine residues. Tyrosine-protein kinase that acts as a cell-surface receptor for fibroblast growth factors and plays an essential role in the regulation of cell proliferation, differentiation, migration and apoptosis, and in the regulation of embryonic development. Required for normal embryonic patterning, limb bud development, lung morphogenesis, osteogenesis and skin development. Plays an essential role in the regulation of osteoblast differentiation, proliferation and apoptosis, and is required for normal skeleton development. Promotes cell proliferation in keratinocytes and immature osteoblasts, but promotes apoptosis in differentiated osteoblasts. Phosphorylates PLCG1, FRS2 and PAK4. Ligand binding leads to the activation of several signaling cascades. Activation of PLCG1 leads to the production of the cellular signaling molecules diacylglycerol and inositol 1,4,5-trisphosphate. Phosphorylation of FRS2 triggers recruitment of GRB2, GAB1, PIK3R1 and SOS1, and mediates activation of RAS, MAPK1/ERK2, MAPK3/ERK1 and the MAP kinase signaling pathway, as well as of the AKT1 signaling pathway. FGFR2 signaling is down-regulated by ubiquitination, internalization and degradation. Mutations that lead to constitutive kinase activation or impair normal FGFR2 maturation, internalization and degradation lead to aberrant signaling. Over-expressed FGFR2 promotes activation of STAT1. The polypeptide is Fibroblast growth factor receptor 2 (FGFR2) (Notophthalmus viridescens (Eastern newt)).